We begin with the raw amino-acid sequence, 134 residues long: MSWQAYVDDHLMCDIEGHEDHRLTAAAIVGHDGSVWAQSATFPQFKPEEMNGIMTDFNEPGHLAPTGLHLGGTKYMVIQGEAGAVIRGKKGSGGITIKKTGQALVFGIYEEPVTPGQCNMVVERLGDYLLEQGL.

Cysteines 13 and 118 form a disulfide. The short motif at 84 to 100 (AVIRGKKGSGGITIKKT) is the Involved in PIP2 interaction element. T114 is modified (phosphothreonine).

Belongs to the profilin family. As to quaternary structure, occurs in many kinds of cells as a complex with monomeric actin in a 1:1 ratio. In terms of processing, phosphorylated by MAP kinases.

The protein resides in the cytoplasm. It localises to the cytoskeleton. In terms of biological role, binds to actin and affects the structure of the cytoskeleton. At high concentrations, profilin prevents the polymerization of actin, whereas it enhances it at low concentrations. This Olea europaea (Common olive) protein is Profilin-4.